The chain runs to 463 residues: Cytoplasmic 60S subunit biogenesis factor SPCC550.15c (463 aa).

C2H2-type zinc fingers lie at residues 5-30 (FACT…DWHH) and 70-94 (QNCE…SKKH). Positions 109 to 136 (KLQSEDASSIASSTLSMGEPVVDSEIEE) are disordered. A compositionally biased stretch (polar residues) spans 113–124 (EDASSIASSTLS). Phosphoserine is present on residues S150 and S155. The disordered stretch occupies residues 155–189 (SLHGRESEPSKTELATSIPQSNEASKSHLFTQEPT). Over residues 167–188 (ELATSIPQSNEASKSHLFTQEP) the composition is skewed to polar residues. 2 C2H2-type zinc fingers span residues 208 to 231 (RDCL…KASH) and 259 to 283 (FTCL…QKGH). Residues 317–338 (TVVEEDGSSGEGDWEDVSDDSD) are compositionally biased toward acidic residues. 2 disordered regions span residues 317 to 341 (TVVE…DNSS) and 444 to 463 (ANKM…ALLQ).

Belongs to the REI1 family. Associates with nascent pre-60S particles that have not yet entered the translating pool, and is released from mature 60S subunits.

The protein resides in the cytoplasm. Functionally, pre-60S-associated factor involved in the cytoplasmic maturation of the 60S subunit. Involved in the dissociation and recycling of other late pre-60S factors before newly synthesized large ribosomal subunits enter translation. The polypeptide is Cytoplasmic 60S subunit biogenesis factor SPCC550.15c (Schizosaccharomyces pombe (strain 972 / ATCC 24843) (Fission yeast)).